The chain runs to 471 residues: Probable ribonuclease FAU-1 (471 aa).

It belongs to the FAU-1 family.

Functionally, probable RNase involved in rRNA stability through maturation and/or degradation of precursor rRNAs. Binds to RNA in loop regions with AU-rich sequences. This chain is Probable ribonuclease FAU-1, found in Aeropyrum pernix (strain ATCC 700893 / DSM 11879 / JCM 9820 / NBRC 100138 / K1).